We begin with the raw amino-acid sequence, 313 residues long: Porphobilinogen deaminase (313 aa).

At Cys242 the chain carries S-(dipyrrolylmethanemethyl)cysteine.

It belongs to the HMBS family. As to quaternary structure, monomer. Dipyrromethane is required as a cofactor.

It catalyses the reaction 4 porphobilinogen + H2O = hydroxymethylbilane + 4 NH4(+). Its pathway is porphyrin-containing compound metabolism; protoporphyrin-IX biosynthesis; coproporphyrinogen-III from 5-aminolevulinate: step 2/4. Tetrapolymerization of the monopyrrole PBG into the hydroxymethylbilane pre-uroporphyrinogen in several discrete steps. In Escherichia coli (strain SE11), this protein is Porphobilinogen deaminase.